The primary structure comprises 407 residues: Phosphopentomutase (407 aa).

Asp-10, Asp-306, His-311, Asp-347, His-348, and His-359 together coordinate Mn(2+).

The protein belongs to the phosphopentomutase family. The cofactor is Mn(2+).

The protein localises to the cytoplasm. It carries out the reaction 2-deoxy-alpha-D-ribose 1-phosphate = 2-deoxy-D-ribose 5-phosphate. The catalysed reaction is alpha-D-ribose 1-phosphate = D-ribose 5-phosphate. The protein operates within carbohydrate degradation; 2-deoxy-D-ribose 1-phosphate degradation; D-glyceraldehyde 3-phosphate and acetaldehyde from 2-deoxy-alpha-D-ribose 1-phosphate: step 1/2. Functionally, isomerase that catalyzes the conversion of deoxy-ribose 1-phosphate (dRib-1-P) and ribose 1-phosphate (Rib-1-P) to deoxy-ribose 5-phosphate (dRib-5-P) and ribose 5-phosphate (Rib-5-P), respectively. The chain is Phosphopentomutase from Escherichia coli O127:H6 (strain E2348/69 / EPEC).